Consider the following 363-residue polypeptide: G-protein coupled receptor 6 (363 aa).

Topologically, residues 1–75 (MNASAAALNE…SGLLLSAVNP (75 aa)) are extracellular. Residues Asn2 and Asn9 are each glycosylated (N-linked (GlcNAc...) asparagine). The disordered stretch occupies residues 28–51 (AGTPDTSEWGPPAASAALGGGGGP). N-linked (GlcNAc...) asparagine glycosylation is present at Asn52. The chain crosses the membrane as a helical span at residues 76–95 (WDVLLCVSGTVIAGENALVV). Topologically, residues 96–107 (ALIASTPALRTP) are cytoplasmic. Residues 108–131 (MFVLVGSLATADLLAGCGLILHFV) form a helical membrane-spanning segment. Residues 132–143 (FQYVVPSETVSL) lie on the Extracellular side of the membrane. The chain crosses the membrane as a helical span at residues 144-165 (LMVGFLVASFAASVSSLLAITV). Residues 166–186 (DRYLSLYNALTYYSRRTLLGV) lie on the Cytoplasmic side of the membrane. The chain crosses the membrane as a helical span at residues 187–206 (HLLLAATWTVSLGLGLLPVL). Topologically, residues 207–231 (GWNCLADRASCSVVRPLTRSHVALL) are extracellular. The helical transmembrane segment at 232-250 (STSFFVVFGIMLHLYVRIC) threads the bilayer. Residues 251–278 (QVVWRHAHQIALQQHCLAPPHLAATRKG) lie on the Cytoplasmic side of the membrane. The helical transmembrane segment at 279–305 (VGTLAVVLGTFGASWLPFAIYCVVGSQ) threads the bilayer. Over 306–310 (EDPAI) the chain is Extracellular. The helical transmembrane segment at 311 to 332 (YTYATLLPATYNSMINPIIYAF) threads the bilayer. Residues 333-363 (RNQEIQRALWLLFCGCFQSKVPFRSRSPSEV) are Cytoplasmic-facing. Cys346 is lipidated: S-palmitoyl cysteine. Residues Ser357, Ser359, and Ser361 each carry the phosphoserine modification.

The protein belongs to the G-protein coupled receptor 1 family. In terms of tissue distribution, expressed in the brain, with a prominent distribution in striatum.

The protein localises to the cell membrane. Its function is as follows. Orphan receptor with constitutive G(s) signaling activity that activate cyclic AMP. Promotes neurite outgrowth and blocks myelin inhibition in neurons. In Rattus norvegicus (Rat), this protein is G-protein coupled receptor 6 (Gpr6).